The following is a 314-amino-acid chain: Taste receptor type 2 member 42 (314 aa).

Residues 1 to 7 (MATELDK) lie on the Extracellular side of the membrane. A helical transmembrane segment spans residues 8 to 28 (IFLTLAIVEFIIGMLGNVFIG). The Cytoplasmic segment spans residues 29 to 50 (LANCSEGIKNQKVFSVDFILTC). Residues 51–71 (LAISTIGHLLVILFDSHVAGL) form a helical membrane-spanning segment. Over 72-101 (APHLYATDRVVRPVTVLWHMTNHLTTWLAT) the chain is Extracellular. A helical transmembrane segment spans residues 102–122 (CLSIFYFFKIAHFPHSLFLWL). At 123 to 127 (RWRMN) the chain is on the cytoplasmic side. A helical transmembrane segment spans residues 128–148 (RVIAILLTLSLFLLIFDCLVL). Residues 149–187 (EMFIDISLNIIDKSNLTLYLDESKTPYDKLFLLKTLLSL) lie on the Extracellular side of the membrane. Residue Asn-163 is glycosylated (N-linked (GlcNAc...) asparagine). A helical membrane pass occupies residues 188 to 208 (NSFIPFSLCLTSLLFLFLSLV). The Cytoplasmic portion of the chain corresponds to 209–238 (RHTRNLKLSSLGSRDSSTEAHRRAMKMVMS). A helical membrane pass occupies residues 239-259 (FLFLFIVHFFSLQVANWTFCI). Topologically, residues 260-265 (LGNNKY) are extracellular. The helical transmembrane segment at 266–286 (TQFVMLALHAFPSCHSFILIL) threads the bilayer. Residues 287-314 (GNSKLRQTAVRLLWHLRNYTKRPNPLPL) are Cytoplasmic-facing.

The protein belongs to the G-protein coupled receptor T2R family.

Its subcellular location is the membrane. Functionally, receptor that may play a role in the perception of bitterness and is gustducin-linked. May play a role in sensing the chemical composition of the gastrointestinal content. The activity of this receptor may stimulate alpha gustducin, mediate PLC-beta-2 activation and lead to the gating of TRPM5. In Papio hamadryas (Hamadryas baboon), this protein is Taste receptor type 2 member 42 (TAS2R42).